The primary structure comprises 301 residues: Acetylglutamate kinase (301 aa).

Residues 68–69 (GG), Arg90, and Asn195 contribute to the substrate site.

This sequence belongs to the acetylglutamate kinase family. ArgB subfamily.

Its subcellular location is the cytoplasm. It catalyses the reaction N-acetyl-L-glutamate + ATP = N-acetyl-L-glutamyl 5-phosphate + ADP. It participates in amino-acid biosynthesis; L-arginine biosynthesis; N(2)-acetyl-L-ornithine from L-glutamate: step 2/4. In terms of biological role, catalyzes the ATP-dependent phosphorylation of N-acetyl-L-glutamate. The sequence is that of Acetylglutamate kinase from Pseudomonas paraeruginosa (strain DSM 24068 / PA7) (Pseudomonas aeruginosa (strain PA7)).